The following is a 292-amino-acid chain: ATP synthase gamma chain (292 aa).

It belongs to the ATPase gamma chain family. F-type ATPases have 2 components, CF(1) - the catalytic core - and CF(0) - the membrane proton channel. CF(1) has five subunits: alpha(3), beta(3), gamma(1), delta(1), epsilon(1). CF(0) has three main subunits: a, b and c.

The protein localises to the cell inner membrane. Produces ATP from ADP in the presence of a proton gradient across the membrane. The gamma chain is believed to be important in regulating ATPase activity and the flow of protons through the CF(0) complex. This chain is ATP synthase gamma chain, found in Methylobacterium nodulans (strain LMG 21967 / CNCM I-2342 / ORS 2060).